A 333-amino-acid polypeptide reads, in one-letter code: cGAMP-activated phospholipase (333 aa).

The PNPLA domain occupies 10 to 191; the sequence is LALSGGGYRG…VGNAPGLFGL (182 aa). Residues 14 to 19 carry the GXGXXG motif; it reads GGGYRG. A GXSXG motif is present at residues 46–50; sequence GTSAG. Serine 48 serves as the catalytic Nucleophile. Catalysis depends on aspartate 178, which acts as the Proton acceptor. Positions 178 to 180 match the DGA/G motif; that stretch reads DGG.

The protein belongs to the patatin family.

The catalysed reaction is a 1,2-diacyl-sn-glycero-3-phosphocholine + H2O = a 2-acyl-sn-glycero-3-phosphocholine + a fatty acid + H(+). The enzyme catalyses 1,2-di-(9Z-octadecenoyl)-sn-glycero-3-phosphoethanolamine + 2 H2O = sn-glycero-3-phosphoethanolamine + 2 (9Z)-octadecenoate + 2 H(+). Phospholipase activity is specifically activated upon cGAMP binding, which is produced by the cognate cyclic nucleotide synthase encoded in the same operon. Is not activated by cyclic dinucleotides 2',3'-cGAMP, c-diAMP or 3',3'-c-diGMP. Effector phospholipase of a CBASS antiviral system. CBASS (cyclic oligonucleotide-based antiphage signaling system) provides immunity against bacteriophages. The CD-NTase protein (CdnA) synthesizes cyclic nucleotides in response to infection; these serve as specific second messenger signals. The signals activate a diverse range of effectors, leading to bacterial cell death and thus abortive phage infection. A type II-A(GA) CBASS system. Functionally, phospholipase that is activated upon binding to the cyclic dinucleotide (CDN) second messenger 3',3'-cyclic GMP-AMP (cGAMP). Degrades phospholipids in the cell membrane. Its function is as follows. The capV-cdnA-cap2-cap3 operon provides about 10(4)-fold protection in strain BWHPSA011 against infection by phage PaMx41. In P.aeruginosa strain PAO1 it confers protection against phages PaMx41 and JBD18 but not JBD67 (JBD18 and JBD67 do not replicate in BWHPSA011 / Pa011). When acb2 in JBD67 is deleted this CBASS operon then protects against JDB67 also. This CBASS system limits prophage induction of lysogenized JBD67 as well as viral lytic replication. In Pseudomonas aeruginosa (strain BWHPSA011 / Pa011), this protein is cGAMP-activated phospholipase.